We begin with the raw amino-acid sequence, 289 residues long: MPKASHQDLRFAFRELLASGSCFHTASVFDPMSARIAADLGFEVGILGGSVASLQVLAAPDFALITLSEFVEQATRIGRVAQLPVLADADHGYGNALNVMRTVIELERAGVAALTIEDTLLPAQFGRKSTDLIPVEEGVGKIRAALEARVDSSLSIIARTNAGVLSTEEIIVRTQSYQKAGADAICMVGVKDFEQLEQIAEHLTVPLMLVTYGNPNLRDDERLARLGVRIVVDGHAAYFAAIKATYDCLRLQRGQQNKSENLSATELSHTYTQPEDYIRWAKEYMSVEE.

Position 50 (serine 50) interacts with substrate. Aspartate 88 is a binding site for Mg(2+). The substrate site is built by arginine 159 and histidine 235.

It belongs to the isocitrate lyase/PEP mutase superfamily. Oxaloacetate decarboxylase family. Homotetramer; dimer of dimers. Mg(2+) is required as a cofactor.

The enzyme catalyses oxaloacetate + H(+) = pyruvate + CO2. Its function is as follows. Catalyzes the decarboxylation of oxaloacetate into pyruvate. Seems to play a role in maintaining cellular concentrations of bicarbonate and pyruvate. This chain is Oxaloacetate decarboxylase, found in Pseudomonas putida (strain GB-1).